Reading from the N-terminus, the 410-residue chain is Multifunctional CCA protein (410 aa).

Positions 8 and 11 each coordinate ATP. 2 residues coordinate CTP: Gly8 and Arg11. Mg(2+) contacts are provided by Glu21 and Asp23. Residues Arg91, Arg137, and Arg140 each coordinate ATP. CTP-binding residues include Arg91, Arg137, and Arg140. Residues 228 to 329 form the HD domain; the sequence is TLLHQFLCLK…WKLFKSLDIL (102 aa).

It belongs to the tRNA nucleotidyltransferase/poly(A) polymerase family. Bacterial CCA-adding enzyme type 1 subfamily. As to quaternary structure, monomer. Can also form homodimers and oligomers. It depends on Mg(2+) as a cofactor. Ni(2+) is required as a cofactor.

The enzyme catalyses a tRNA precursor + 2 CTP + ATP = a tRNA with a 3' CCA end + 3 diphosphate. The catalysed reaction is a tRNA with a 3' CCA end + 2 CTP + ATP = a tRNA with a 3' CCACCA end + 3 diphosphate. In terms of biological role, catalyzes the addition and repair of the essential 3'-terminal CCA sequence in tRNAs without using a nucleic acid template. Adds these three nucleotides in the order of C, C, and A to the tRNA nucleotide-73, using CTP and ATP as substrates and producing inorganic pyrophosphate. tRNA 3'-terminal CCA addition is required both for tRNA processing and repair. Also involved in tRNA surveillance by mediating tandem CCA addition to generate a CCACCA at the 3' terminus of unstable tRNAs. While stable tRNAs receive only 3'-terminal CCA, unstable tRNAs are marked with CCACCA and rapidly degraded. The sequence is that of Multifunctional CCA protein from Alcanivorax borkumensis (strain ATCC 700651 / DSM 11573 / NCIMB 13689 / SK2).